Reading from the N-terminus, the 91-residue chain is DNA-directed RNA polymerase subunit omega (91 aa).

This sequence belongs to the RNA polymerase subunit omega family. The RNAP catalytic core consists of 2 alpha, 1 beta, 1 beta' and 1 omega subunit. When a sigma factor is associated with the core the holoenzyme is formed, which can initiate transcription.

It carries out the reaction RNA(n) + a ribonucleoside 5'-triphosphate = RNA(n+1) + diphosphate. Its function is as follows. Promotes RNA polymerase assembly. Latches the N- and C-terminal regions of the beta' subunit thereby facilitating its interaction with the beta and alpha subunits. This is DNA-directed RNA polymerase subunit omega from Yersinia enterocolitica serotype O:8 / biotype 1B (strain NCTC 13174 / 8081).